We begin with the raw amino-acid sequence, 194 residues long: ATP-dependent Clp protease proteolytic subunit 3 (194 aa).

The active-site Nucleophile is the Ser96. Residue His121 is part of the active site.

Belongs to the peptidase S14 family. In terms of assembly, fourteen ClpP subunits assemble into 2 heptameric rings which stack back to back to give a disk-like structure with a central cavity, resembling the structure of eukaryotic proteasomes.

It is found in the cytoplasm. The catalysed reaction is Hydrolysis of proteins to small peptides in the presence of ATP and magnesium. alpha-casein is the usual test substrate. In the absence of ATP, only oligopeptides shorter than five residues are hydrolyzed (such as succinyl-Leu-Tyr-|-NHMec, and Leu-Tyr-Leu-|-Tyr-Trp, in which cleavage of the -Tyr-|-Leu- and -Tyr-|-Trp bonds also occurs).. Cleaves peptides in various proteins in a process that requires ATP hydrolysis. Has a chymotrypsin-like activity. Plays a major role in the degradation of misfolded proteins. This is ATP-dependent Clp protease proteolytic subunit 3 from Rhizobium johnstonii (strain DSM 114642 / LMG 32736 / 3841) (Rhizobium leguminosarum bv. viciae).